A 180-amino-acid chain; its full sequence is Oligoribonuclease (180 aa).

The Exonuclease domain maps to Leu7 to Leu170. Tyr128 is a catalytic residue.

Belongs to the oligoribonuclease family.

It is found in the cytoplasm. Its function is as follows. 3'-to-5' exoribonuclease specific for small oligoribonucleotides. This Ectopseudomonas mendocina (strain ymp) (Pseudomonas mendocina) protein is Oligoribonuclease.